A 486-amino-acid polypeptide reads, in one-letter code: Bifunctional protein GlmU (486 aa).

The segment at 1 to 241 (MSASDSSSAV…ARELAGVNDR (241 aa)) is pyrophosphorylase. UDP-N-acetyl-alpha-D-glucosamine contacts are provided by residues 13–16 (LAAG), lysine 27, glutamine 84, and 89–90 (GT). Mg(2+) is bound at residue aspartate 114. UDP-N-acetyl-alpha-D-glucosamine contacts are provided by glycine 151, glutamate 166, asparagine 181, and asparagine 239. Residue asparagine 239 coordinates Mg(2+). The interval 242–262 (VQLAEAGAELNRRTVEAAMRG) is linker. Residues 263-486 (GATIVDPATT…AQNSVPNQEG (224 aa)) are N-acetyltransferase. UDP-N-acetyl-alpha-D-glucosamine is bound by residues arginine 344 and lysine 362. Histidine 374 (proton acceptor) is an active-site residue. Residues tyrosine 377 and asparagine 388 each contribute to the UDP-N-acetyl-alpha-D-glucosamine site. Residues alanine 391, 397-398 (NY), serine 416, and alanine 434 each bind acetyl-CoA. The tract at residues 464–486 (KRPGTAAADAAAAAQNSVPNQEG) is disordered.

This sequence in the N-terminal section; belongs to the N-acetylglucosamine-1-phosphate uridyltransferase family. The protein in the C-terminal section; belongs to the transferase hexapeptide repeat family. As to quaternary structure, homotrimer. It depends on Mg(2+) as a cofactor.

It localises to the cytoplasm. The catalysed reaction is alpha-D-glucosamine 1-phosphate + acetyl-CoA = N-acetyl-alpha-D-glucosamine 1-phosphate + CoA + H(+). It carries out the reaction N-acetyl-alpha-D-glucosamine 1-phosphate + UTP + H(+) = UDP-N-acetyl-alpha-D-glucosamine + diphosphate. The protein operates within nucleotide-sugar biosynthesis; UDP-N-acetyl-alpha-D-glucosamine biosynthesis; N-acetyl-alpha-D-glucosamine 1-phosphate from alpha-D-glucosamine 6-phosphate (route II): step 2/2. It functions in the pathway nucleotide-sugar biosynthesis; UDP-N-acetyl-alpha-D-glucosamine biosynthesis; UDP-N-acetyl-alpha-D-glucosamine from N-acetyl-alpha-D-glucosamine 1-phosphate: step 1/1. Its pathway is bacterial outer membrane biogenesis; LPS lipid A biosynthesis. Catalyzes the last two sequential reactions in the de novo biosynthetic pathway for UDP-N-acetylglucosamine (UDP-GlcNAc). The C-terminal domain catalyzes the transfer of acetyl group from acetyl coenzyme A to glucosamine-1-phosphate (GlcN-1-P) to produce N-acetylglucosamine-1-phosphate (GlcNAc-1-P), which is converted into UDP-GlcNAc by the transfer of uridine 5-monophosphate (from uridine 5-triphosphate), a reaction catalyzed by the N-terminal domain. This Corynebacterium efficiens (strain DSM 44549 / YS-314 / AJ 12310 / JCM 11189 / NBRC 100395) protein is Bifunctional protein GlmU.